We begin with the raw amino-acid sequence, 262 residues long: Acyl-[acyl-carrier-protein]--UDP-N-acetylglucosamine O-acyltransferase (262 aa).

It belongs to the transferase hexapeptide repeat family. LpxA subfamily. Homotrimer.

The protein resides in the cytoplasm. The enzyme catalyses a (3R)-hydroxyacyl-[ACP] + UDP-N-acetyl-alpha-D-glucosamine = a UDP-3-O-[(3R)-3-hydroxyacyl]-N-acetyl-alpha-D-glucosamine + holo-[ACP]. It participates in glycolipid biosynthesis; lipid IV(A) biosynthesis; lipid IV(A) from (3R)-3-hydroxytetradecanoyl-[acyl-carrier-protein] and UDP-N-acetyl-alpha-D-glucosamine: step 1/6. Functionally, involved in the biosynthesis of lipid A, a phosphorylated glycolipid that anchors the lipopolysaccharide to the outer membrane of the cell. This Vibrio campbellii (strain ATCC BAA-1116) protein is Acyl-[acyl-carrier-protein]--UDP-N-acetylglucosamine O-acyltransferase.